We begin with the raw amino-acid sequence, 243 residues long: Tyrosine recombinase XerD-like (243 aa).

Residues 1-72 enclose the Core-binding (CB) domain; the sequence is MKQAIESFIQ…AVNQFLYFLY (72 aa). Positions 91 to 243 constitute a Tyr recombinase domain; the sequence is SVKKKLERED…KTSMSLEKFR (153 aa). Residues Lys149 and Arg210 contribute to the active site.

The protein belongs to the 'phage' integrase family. XerD-like subfamily.

It localises to the cytoplasm. In terms of biological role, putative tyrosine recombinase. Not involved in the cutting and rejoining of the recombining DNA molecules on dif(SL) site. In Streptococcus suis (strain 98HAH33), this protein is Tyrosine recombinase XerD-like.